A 202-amino-acid chain; its full sequence is Nudix hydrolase 13, mitochondrial (202 aa).

Residues 18 to 167 enclose the Nudix hydrolase domain; sequence NFRLVSGCIP…WMQSALEEFL (150 aa). The Nudix box motif lies at 65 to 86; the sequence is GGWEDDETVLEAASREAMEEAG. The Mg(2+) site is built by glutamate 80 and glutamate 84.

This sequence belongs to the Nudix hydrolase family. As to quaternary structure, monomer. Mg(2+) is required as a cofactor. As to expression, expressed in roots, leaves, stems and inflorescences.

Its subcellular location is the mitochondrion. Inhibited by fluoride. Its function is as follows. Mediates the hydrolysis of some nucleoside diphosphate derivatives. Can use diadenosine 5',5'''-P(1)P(6) hexaphosphate (Ap(6)A), diadenosine 5',5'''-P(1)P(5) pentaphosphate (Ap(5)A) and adenosine tetraphosphate (p(4)A) as substrates, but not diadenosine 5',5'''-P(1)P(4) tetraphosphate (Ap(4)A), diadenosine 5',5'''-P(1)P(3) triphosphate (Ap(3)A), deoxyribonucleoside triphosphates, ribonucleoside triphosphates, diphosphoinositol pentakisphosphate (PP-InsP(5)) and 5-phospho-alpha-D-ribosyl diphosphate (PRPP). This chain is Nudix hydrolase 13, mitochondrial (NUDT13), found in Arabidopsis thaliana (Mouse-ear cress).